The chain runs to 453 residues: Ankyrin repeat and SOCS box protein 16 (453 aa).

ANK repeat units lie at residues 56–85 (CRDP…AANM), 110–139 (KQTA…ELDA), 142–171 (GGRA…KANV), 175–204 (EGMT…SVNV), 209–238 (SEVT…DVAL), 242–279 (QGET…DPQA), and 283–312 (KRHT…SPGV). Positions 397–453 (FYSSALSMENQPRQLQHLARLAVRAQLGSHCRQAAAQLPLPPLLRDYLLLGVEGRIQ) constitute an SOCS box domain.

It belongs to the ankyrin SOCS box (ASB) family.

The protein operates within protein modification; protein ubiquitination. Its function is as follows. May be a substrate-recognition component of a SCF-like ECS (Elongin-Cullin-SOCS-box protein) E3 ubiquitin-protein ligase complex which mediates the ubiquitination and subsequent proteasomal degradation of target proteins. The protein is Ankyrin repeat and SOCS box protein 16 (Asb16) of Mus musculus (Mouse).